A 518-amino-acid chain; its full sequence is Sugar transport protein MST3 (518 aa).

The Cytoplasmic portion of the chain corresponds to 1 to 18 (MAGGAVVSTGAGKDYPGK). The helical transmembrane segment at 19 to 39 (LTLFVFFTCVVAATGGLIFGY) threads the bilayer. The Extracellular segment spans residues 40–80 (DIGISGGVTSMDPFLRKFFPEVYRKKQMADKNNQYCKYDNQ). Residues 81–101 (LLQTFTSSLYLAALVSSFFAA) form a helical membrane-spanning segment. At 102–117 (TVTRVLGRKWSMFAGG) the chain is on the cytoplasmic side. The chain crosses the membrane as a helical span at residues 118-138 (LTFLIGAALNGAAENVAMLIV). Over 139 to 140 (GR) the chain is Extracellular. A helical transmembrane segment spans residues 141 to 161 (ILLGVGVGFANQSVPVYLSEM). Residues 162 to 167 (APARLR) are Cytoplasmic-facing. The helical transmembrane segment at 168–188 (GMLNIGFQLMITIGILAAELI) threads the bilayer. Topologically, residues 189 to 202 (NYGTAKIKAGWGWR) are extracellular. The helical transmembrane segment at 203 to 223 (VSLALAAVPAAIITLGSLFLP) threads the bilayer. The Cytoplasmic segment spans residues 224 to 290 (DTPNSLIDRG…YRAQLTMAIC (67 aa)). A helical transmembrane segment spans residues 291–311 (IPFFQQLTGINVIMFYAPVLF). Residues 312–322 (DTLGFKSDASL) are Extracellular-facing. A helical transmembrane segment spans residues 323-343 (MSAVITGLVNVFATLVSIFTV). Topologically, residues 344–351 (DRLGRRKL) are cytoplasmic. The chain crosses the membrane as a helical span at residues 352-372 (FLQGGAQMVVCQVVVGTLIAV). Residues 373–387 (KFGTSGIGDIPKGYA) are Extracellular-facing. The helical transmembrane segment at 388-408 (AVVVLFICMYVAGFAWSWGPL) threads the bilayer. Residues 409–427 (GWLVPSEIFPLEIRPAGQS) are Cytoplasmic-facing. The chain crosses the membrane as a helical span at residues 428-448 (INVSVNMLFTFVIAQAFLTML). The Extracellular portion of the chain corresponds to 449 to 452 (CHMK). Residues 453–473 (FGLFYFFAGWVVIMTVFIALF) traverse the membrane as a helical segment. At 474 to 518 (LPETKNVPIEEMVLVWKSHWFWRRFIGDHDVHVGANHVSNNKLQP) the chain is on the cytoplasmic side.

The protein belongs to the major facilitator superfamily. Sugar transporter (TC 2.A.1.1) family. As to expression, highly expressed in roots. Expressed in xylem and sclerenchyma cells of roots. Expressed at low levels in leaves.

Its subcellular location is the membrane. In terms of biological role, mediates active uptake of hexoses by sugar:proton symport. Can transport glucose, xylose and 3-O-methylglucose. May be involved in the accumulation of monosaccharides required for cell wall synthesis during root development. This Oryza sativa subsp. japonica (Rice) protein is Sugar transport protein MST3.